The primary structure comprises 306 residues: Non-specific ribonucleoside hydrolase RihC (306 aa).

H235 is an active-site residue.

Belongs to the IUNH family. RihC subfamily.

In terms of biological role, hydrolyzes both purine and pyrimidine ribonucleosides with a broad-substrate specificity. In Salmonella typhi, this protein is Non-specific ribonucleoside hydrolase RihC.